Here is a 169-residue protein sequence, read N- to C-terminus: Ribosome maturation factor RimM (169 aa).

Residues 96-169 (DGEYYWADLI…RILVDWGLDY (74 aa)) enclose the PRC barrel domain.

Belongs to the RimM family. In terms of assembly, binds ribosomal protein uS19.

The protein localises to the cytoplasm. An accessory protein needed during the final step in the assembly of 30S ribosomal subunit, possibly for assembly of the head region. Essential for efficient processing of 16S rRNA. May be needed both before and after RbfA during the maturation of 16S rRNA. It has affinity for free ribosomal 30S subunits but not for 70S ribosomes. The protein is Ribosome maturation factor RimM of Chromobacterium violaceum (strain ATCC 12472 / DSM 30191 / JCM 1249 / CCUG 213 / NBRC 12614 / NCIMB 9131 / NCTC 9757 / MK).